The chain runs to 511 residues: 2-isopropylmalate synthase (511 aa).

One can recognise a Pyruvate carboxyltransferase domain in the interval 6-269 (IIIFDTTLRD…YTDIKCENIF (264 aa)). Aspartate 15, histidine 203, histidine 205, and asparagine 239 together coordinate Mn(2+). The regulatory domain stretch occupies residues 394 to 511 (VIEKLSVISG…SLKVEERKMA (118 aa)).

The protein belongs to the alpha-IPM synthase/homocitrate synthase family. LeuA type 1 subfamily. As to quaternary structure, homodimer. Mn(2+) serves as cofactor.

Its subcellular location is the cytoplasm. The enzyme catalyses 3-methyl-2-oxobutanoate + acetyl-CoA + H2O = (2S)-2-isopropylmalate + CoA + H(+). It participates in amino-acid biosynthesis; L-leucine biosynthesis; L-leucine from 3-methyl-2-oxobutanoate: step 1/4. Catalyzes the condensation of the acetyl group of acetyl-CoA with 3-methyl-2-oxobutanoate (2-ketoisovalerate) to form 3-carboxy-3-hydroxy-4-methylpentanoate (2-isopropylmalate). This chain is 2-isopropylmalate synthase, found in Campylobacter jejuni subsp. jejuni serotype O:23/36 (strain 81-176).